Reading from the N-terminus, the 617-residue chain is Acyl-CoA dehydrogenase family member 11 (617 aa).

The interval 1–47 is disordered; the sequence is MHRIGNAVRMASSSSANATITARHTQYSHAKTGGFSQTGPTLHNPYK. Positions 11-22 are enriched in low complexity; the sequence is ASSSSANATITA. Over residues 23–41 the composition is skewed to polar residues; sequence RHTQYSHAKTGGFSQTGPT. Residues 206 to 215 and 241 to 243 contribute to the FAD site; these read QWMTEKKGGS and FSS. Residue Ser215 participates in substrate binding. Substrate contacts are provided by Ser267 and Arg334. FAD-binding positions include Arg359, 366–369, Glu437, Gly441, and 464–466; these read QSKW and EGT.

The protein belongs to the acyl-CoA dehydrogenase family. Homotetramer; dimer of dimers.

In terms of biological role, promotes adaption to elevated temperatures by regulating expression of the lipid desaturase, fat-7. Binds selectively and with high affinity to fatty acids with chain lengths from C10 to C12 and prevents them from activating fat-7 expression mediated by the nuclear hormone receptor nhr-49, leading to low levels of membrane lipid desaturation and membrane fluidity for adaption to heat. This is Acyl-CoA dehydrogenase family member 11 from Caenorhabditis elegans.